The chain runs to 365 residues: DNA replication and repair protein RecF (365 aa).

An ATP-binding site is contributed by Gly30 to Thr37.

The protein belongs to the RecF family.

Its subcellular location is the cytoplasm. Functionally, the RecF protein is involved in DNA metabolism; it is required for DNA replication and normal SOS inducibility. RecF binds preferentially to single-stranded, linear DNA. It also seems to bind ATP. The chain is DNA replication and repair protein RecF from Geobacter metallireducens (strain ATCC 53774 / DSM 7210 / GS-15).